The chain runs to 493 residues: UDP-N-acetylmuramate--L-alanine ligase (493 aa).

126 to 132 (GTHGKTT) lines the ATP pocket.

It belongs to the MurCDEF family.

Its subcellular location is the cytoplasm. The catalysed reaction is UDP-N-acetyl-alpha-D-muramate + L-alanine + ATP = UDP-N-acetyl-alpha-D-muramoyl-L-alanine + ADP + phosphate + H(+). Its pathway is cell wall biogenesis; peptidoglycan biosynthesis. Functionally, cell wall formation. The chain is UDP-N-acetylmuramate--L-alanine ligase from Hamiltonella defensa subsp. Acyrthosiphon pisum (strain 5AT).